The primary structure comprises 200 residues: Recombination protein RecR (200 aa).

The segment at 60 to 75 adopts a C4-type zinc-finger fold; that stretch reads CVYCQALTEDDVCNIC. Residues 83–177 enclose the Toprim domain; sequence TKLCIIESML…KISRIGFGVP (95 aa).

The protein belongs to the RecR family.

May play a role in DNA repair. It seems to be involved in an RecBC-independent recombinational process of DNA repair. It may act with RecF and RecO. The chain is Recombination protein RecR from Francisella tularensis subsp. tularensis (strain WY96-3418).